Here is a 630-residue protein sequence, read N- to C-terminus: Pro-interleukin-16 (630 aa).

Disordered regions lie at residues 30–268 and 316–343; these read ENPG…FPLT and PKEG…ASDT. The segment covering 129 to 143 has biased composition (low complexity); it reads IRASSSSSIKQRISS. Phosphoserine is present on Ser220. The span at 321–343 shows a compositional bias: polar residues; sequence SPTSSSNEDSAANGSAETSASDT. The interaction with PPP1R12A, PPP1R12B and PPP1R12C stretch occupies residues 404–500; sequence KQLDSIHVTI…IVTRKLTAES (97 aa). PDZ domains are found at residues 410 to 495 and 532 to 617; these read HVTI…VTRK and TVTL…IRRK.

Homotetramer. Pro-interleukin-16 interacts (via PDZ 2 domain) with PPP1R12A, PPP1R12B and PPP1R12C. Pro-interleukin-16 interacts with GRIN2A. Pro-interleukin-16 interacts with GABPB1. Pro-interleukin-16 interacts (via PDZ 3 domain) with HDAC3.

The protein localises to the secreted. It localises to the cytoplasm. It is found in the nucleus. Interleukin-16 stimulates a migratory response in CD4+ lymphocytes, monocytes, and eosinophils. Primes CD4+ T-cells for IL-2 and IL-15 responsiveness. Also induces T-lymphocyte expression of interleukin 2 receptor. Ligand for CD4. Its function is as follows. Pro-interleukin-16 is involved in cell cycle progression in T-cells. Appears to be involved in transcriptional regulation of SKP2 and is probably part of a transcriptional repression complex on the core promoter of the SKP2 gene. May act as a scaffold for GABPB1 (the DNA-binding subunit the GABP transcription factor complex) and HDAC3 thus maintaining transcriptional repression and blocking cell cycle progression in resting T-cells. The chain is Pro-interleukin-16 (IL16) from Macaca fascicularis (Crab-eating macaque).